The chain runs to 187 residues: Guanylate kinase (187 aa).

Serine 2 carries the post-translational modification N-acetylserine. The 183-residue stretch at 2–184 folds into the Guanylate kinase-like domain; sequence SRPIVISGPS…AYKELKDFIF (183 aa). 9–16 provides a ligand contact to ATP; that stretch reads GPSGTGKS. Residues serine 35, 39-42, tyrosine 51, glutamate 70, 79-81, and aspartate 101 contribute to the GMP site; these read RTPR and YGS. Serine 149 is subject to Phosphoserine. The residue at position 157 (tyrosine 157) is a Phosphotyrosine.

Belongs to the guanylate kinase family. As to quaternary structure, monomer.

The catalysed reaction is GMP + ATP = GDP + ADP. Its function is as follows. Catalyzes the reversible transfer of the terminal phosphoryl group of ATP to the acceptor molecule GMP. Essential for recycling GMP and indirectly, cGMP. This is Guanylate kinase (GUK1) from Saccharomyces cerevisiae (strain ATCC 204508 / S288c) (Baker's yeast).